The primary structure comprises 253 residues: Ribonuclease HII (253 aa).

The region spanning 70-253 (NLIAGIDEVG…KSFEPIKSML (184 aa)) is the RNase H type-2 domain. 3 residues coordinate a divalent metal cation: aspartate 76, glutamate 77, and aspartate 168.

It belongs to the RNase HII family. It depends on Mn(2+) as a cofactor. The cofactor is Mg(2+).

It is found in the cytoplasm. It catalyses the reaction Endonucleolytic cleavage to 5'-phosphomonoester.. Functionally, endonuclease that specifically degrades the RNA of RNA-DNA hybrids. In Streptococcus agalactiae serotype III (strain NEM316), this protein is Ribonuclease HII.